We begin with the raw amino-acid sequence, 316 residues long: Endochitinase WIN8 (316 aa).

The signal sequence occupies residues 1-23 (MRFWALTVLSLLLSLLLGVSSDT). The 41-residue stretch at 24-64 (AQCGSQAGNATCPNDLCCSSGGYCGLTVAYCCAGCVSQCRN) folds into the Chitin-binding type-1 domain. 7 disulfides stabilise this stretch: cysteine 26–cysteine 41, cysteine 35–cysteine 47, cysteine 40–cysteine 54, cysteine 58–cysteine 62, cysteine 84–cysteine 146, cysteine 158–cysteine 168, and cysteine 266–cysteine 298. Glutamate 128 (proton donor) is an active-site residue.

The protein belongs to the glycosyl hydrolase 19 family. Chitinase class I subfamily.

It carries out the reaction Random endo-hydrolysis of N-acetyl-beta-D-glucosaminide (1-&gt;4)-beta-linkages in chitin and chitodextrins.. Defense against chitin-containing fungal pathogens. This chain is Endochitinase WIN8 (WIN8), found in Populus trichocarpa (Western balsam poplar).